A 1177-amino-acid chain; its full sequence is DNA-directed RNA polymerase subunit beta (1177 aa).

Positions 1–36 (MEGCILADSRQSKTAASPSPSRPQSSSNNSVPGAPN) are disordered. Residues 17-32 (SPSPSRPQSSSNNSVP) are compositionally biased toward low complexity.

This sequence belongs to the RNA polymerase beta chain family. The RNAP catalytic core consists of 2 alpha, 1 beta, 1 beta' and 1 omega subunit. When a sigma factor is associated with the core the holoenzyme is formed, which can initiate transcription.

The catalysed reaction is RNA(n) + a ribonucleoside 5'-triphosphate = RNA(n+1) + diphosphate. DNA-dependent RNA polymerase catalyzes the transcription of DNA into RNA using the four ribonucleoside triphosphates as substrates. The chain is DNA-directed RNA polymerase subunit beta from Mycobacterium tuberculosis (strain ATCC 25177 / H37Ra).